Consider the following 338-residue polypeptide: Phosphate acyltransferase (338 aa).

It belongs to the PlsX family. As to quaternary structure, homodimer. Probably interacts with PlsY.

It is found in the cytoplasm. It catalyses the reaction a fatty acyl-[ACP] + phosphate = an acyl phosphate + holo-[ACP]. The protein operates within lipid metabolism; phospholipid metabolism. Catalyzes the reversible formation of acyl-phosphate (acyl-PO(4)) from acyl-[acyl-carrier-protein] (acyl-ACP). This enzyme utilizes acyl-ACP as fatty acyl donor, but not acyl-CoA. This Mannheimia succiniciproducens (strain KCTC 0769BP / MBEL55E) protein is Phosphate acyltransferase.